Here is a 412-residue protein sequence, read N- to C-terminus: DNA replication and repair protein RecF (412 aa).

Residue Gly-30–Thr-37 coordinates ATP.

This sequence belongs to the RecF family.

The protein resides in the cytoplasm. In terms of biological role, the RecF protein is involved in DNA metabolism; it is required for DNA replication and normal SOS inducibility. RecF binds preferentially to single-stranded, linear DNA. It also seems to bind ATP. The sequence is that of DNA replication and repair protein RecF from Bifidobacterium longum subsp. infantis (strain ATCC 15697 / DSM 20088 / JCM 1222 / NCTC 11817 / S12).